Reading from the N-terminus, the 463-residue chain is Dihydrolipoyllysine-residue succinyltransferase component of 2-oxoglutarate dehydrogenase complex, mitochondrial (463 aa).

One can recognise a Lipoyl-binding domain in the interval 73-148 (STSIEVPPMA…TVGEELAQVE (76 aa)). At Lys114 the chain carries N6-lipoyllysine. The tract at residues 144 to 237 (LAQVEPGEAP…FTPFPRTETR (94 aa)) is disordered. Positions 148 to 157 (EPGEAPAEGS) are enriched in low complexity. Residues 184–212 (TASKKEAAPKKEAAPKKEVTEPKKADQPK) show a composition bias toward basic and acidic residues. 3 consecutive repeat copies span residues 185–190 (ASKKEA), 191–196 (APKKEA), and 197–202 (APKKEV). The segment at 185 to 209 (ASKKEAAPKKEAAPKKEVTEPKKAD) is 4 X 6 AA approximate tandem repeats of A-[SP]-K-K-E-[AV]. One copy of the 4; approximate repeat lies at 204–209 (EPKKAD). The residue at position 340 (Thr340) is a Phosphothreonine. Residues His435 and Asp439 contribute to the active site.

Belongs to the 2-oxoacid dehydrogenase family. In terms of assembly, component of the 2-oxoglutarate dehydrogenase complex (OGDC), also called alpha-ketoglutarate dehydrogenase (KGDH) complex. The copmplex is composed of the catalytic subunits OGDH (2-oxoglutarate dehydrogenase KGD1; also called E1 subunit), DLST (dihydrolipoamide succinyltransferase KGD2; also called E2 subunit) and DLD (dihydrolipoamide dehydrogenase LPD1; also called E3 subunit), and the assembly factor KGD4. Requires (R)-lipoate as cofactor.

Its subcellular location is the mitochondrion. It catalyses the reaction N(6)-[(R)-dihydrolipoyl]-L-lysyl-[protein] + succinyl-CoA = N(6)-[(R)-S(8)-succinyldihydrolipoyl]-L-lysyl-[protein] + CoA. It participates in amino-acid degradation; L-lysine degradation via saccharopine pathway; glutaryl-CoA from L-lysine: step 6/6. Functionally, the 2-oxoglutarate dehydrogenase complex catalyzes the overall conversion of 2-oxoglutarate to succinyl-CoA and CO(2). It contains multiple copies of three enzymatic components: 2-oxoglutarate dehydrogenase (E1), dihydrolipoamide succinyltransferase (E2) and lipoamide dehydrogenase (E3). The chain is Dihydrolipoyllysine-residue succinyltransferase component of 2-oxoglutarate dehydrogenase complex, mitochondrial (KGD2) from Saccharomyces cerevisiae (strain ATCC 204508 / S288c) (Baker's yeast).